Consider the following 486-residue polypeptide: Protein nucleotidyltransferase YdiU (486 aa).

ATP contacts are provided by glycine 90, glycine 92, arginine 93, lysine 113, aspartate 125, glycine 126, arginine 176, and arginine 183. Aspartate 252 acts as the Proton acceptor in catalysis. Residues asparagine 253 and aspartate 262 each coordinate Mg(2+). ATP is bound at residue aspartate 262.

Belongs to the SELO family. Mg(2+) is required as a cofactor. The cofactor is Mn(2+).

It catalyses the reaction L-seryl-[protein] + ATP = 3-O-(5'-adenylyl)-L-seryl-[protein] + diphosphate. The enzyme catalyses L-threonyl-[protein] + ATP = 3-O-(5'-adenylyl)-L-threonyl-[protein] + diphosphate. The catalysed reaction is L-tyrosyl-[protein] + ATP = O-(5'-adenylyl)-L-tyrosyl-[protein] + diphosphate. It carries out the reaction L-histidyl-[protein] + UTP = N(tele)-(5'-uridylyl)-L-histidyl-[protein] + diphosphate. It catalyses the reaction L-seryl-[protein] + UTP = O-(5'-uridylyl)-L-seryl-[protein] + diphosphate. The enzyme catalyses L-tyrosyl-[protein] + UTP = O-(5'-uridylyl)-L-tyrosyl-[protein] + diphosphate. Functionally, nucleotidyltransferase involved in the post-translational modification of proteins. It can catalyze the addition of adenosine monophosphate (AMP) or uridine monophosphate (UMP) to a protein, resulting in modifications known as AMPylation and UMPylation. The sequence is that of Protein nucleotidyltransferase YdiU from Pseudomonas aeruginosa (strain UCBPP-PA14).